The chain runs to 213 residues: Holliday junction branch migration complex subunit RuvA (213 aa).

The tract at residues 1-63 (MIGMLTGRVA…EDAFKLYGFL (63 aa)) is domain I. Residues 64–142 (DDIDRAWFVH…PTGRSFSIGL (79 aa)) are domain II. Residues 143–160 (PVHSDDGTTGGAPVAPAG) are flexible linker. Residues 161–213 (GDSLAREDAVSALVNLGYNESQARQAVAKILRDADSEAPLGDVIRLSLKELAA) are domain III.

It belongs to the RuvA family. In terms of assembly, homotetramer. Forms an RuvA(8)-RuvB(12)-Holliday junction (HJ) complex. HJ DNA is sandwiched between 2 RuvA tetramers; dsDNA enters through RuvA and exits via RuvB. An RuvB hexamer assembles on each DNA strand where it exits the tetramer. Each RuvB hexamer is contacted by two RuvA subunits (via domain III) on 2 adjacent RuvB subunits; this complex drives branch migration. In the full resolvosome a probable DNA-RuvA(4)-RuvB(12)-RuvC(2) complex forms which resolves the HJ.

It is found in the cytoplasm. Functionally, the RuvA-RuvB-RuvC complex processes Holliday junction (HJ) DNA during genetic recombination and DNA repair, while the RuvA-RuvB complex plays an important role in the rescue of blocked DNA replication forks via replication fork reversal (RFR). RuvA specifically binds to HJ cruciform DNA, conferring on it an open structure. The RuvB hexamer acts as an ATP-dependent pump, pulling dsDNA into and through the RuvAB complex. HJ branch migration allows RuvC to scan DNA until it finds its consensus sequence, where it cleaves and resolves the cruciform DNA. The sequence is that of Holliday junction branch migration complex subunit RuvA from Maricaulis maris (strain MCS10) (Caulobacter maris).